Reading from the N-terminus, the 727-residue chain is Polyribonucleotide nucleotidyltransferase (727 aa).

Residues Asp-491 and Asp-497 each contribute to the Mg(2+) site. In terms of domain architecture, KH spans 558-617 (PRIITASIHPDKIREVIGPGGKTIKKIIDETGVKIDIEDDGRVFISAVDGEAGENALKII). The S1 motif domain occupies 627-701 (GRIYNGRVTR…KQGRLNLSRK (75 aa)). The segment at 698-727 (LSRKEALPNPNPSSNPNPNGITANRNPRNS) is disordered. Residues 717–727 (GITANRNPRNS) show a composition bias toward polar residues.

It belongs to the polyribonucleotide nucleotidyltransferase family. The cofactor is Mg(2+).

The protein resides in the cytoplasm. It catalyses the reaction RNA(n+1) + phosphate = RNA(n) + a ribonucleoside 5'-diphosphate. Its function is as follows. Involved in mRNA degradation. Catalyzes the phosphorolysis of single-stranded polyribonucleotides processively in the 3'- to 5'-direction. The sequence is that of Polyribonucleotide nucleotidyltransferase from Desulfitobacterium hafniense (strain Y51).